Reading from the N-terminus, the 191-residue chain is Peptidyl-tRNA hydrolase (191 aa).

Residue Tyr-16 participates in tRNA binding. Residue His-21 is the Proton acceptor of the active site. Phe-66, Asn-68, and Asn-114 together coordinate tRNA.

It belongs to the PTH family. In terms of assembly, monomer.

The protein localises to the cytoplasm. The enzyme catalyses an N-acyl-L-alpha-aminoacyl-tRNA + H2O = an N-acyl-L-amino acid + a tRNA + H(+). Its function is as follows. Hydrolyzes ribosome-free peptidyl-tRNAs (with 1 or more amino acids incorporated), which drop off the ribosome during protein synthesis, or as a result of ribosome stalling. Catalyzes the release of premature peptidyl moieties from peptidyl-tRNA molecules trapped in stalled 50S ribosomal subunits, and thus maintains levels of free tRNAs and 50S ribosomes. This is Peptidyl-tRNA hydrolase from Geotalea uraniireducens (strain Rf4) (Geobacter uraniireducens).